A 544-amino-acid chain; its full sequence is CTP synthase (544 aa).

Positions 1-267 (MAKFVFITGG…AQRVLQILNL (267 aa)) are amidoligase domain. Residue S13 coordinates CTP. Position 13 (S13) interacts with UTP. 14–19 (SIGKGI) serves as a coordination point for ATP. Residue Y54 coordinates L-glutamine. D71 contacts ATP. Residues D71 and E141 each contribute to the Mg(2+) site. CTP-binding positions include 148-150 (DIE), 188-193 (KTKPTQ), and K224. Residues 188–193 (KTKPTQ) and K224 contribute to the UTP site. One can recognise a Glutamine amidotransferase type-1 domain in the interval 292 to 534 (EIAIVGKYVR…IEAALRSRSR (243 aa)). G354 is a binding site for L-glutamine. Catalysis depends on C381, which acts as the Nucleophile; for glutamine hydrolysis. L-glutamine is bound by residues 382 to 385 (LGMQ), E405, and R462. Catalysis depends on residues H507 and E509.

The protein belongs to the CTP synthase family. In terms of assembly, homotetramer.

The enzyme catalyses UTP + L-glutamine + ATP + H2O = CTP + L-glutamate + ADP + phosphate + 2 H(+). It catalyses the reaction L-glutamine + H2O = L-glutamate + NH4(+). It carries out the reaction UTP + NH4(+) + ATP = CTP + ADP + phosphate + 2 H(+). Its pathway is pyrimidine metabolism; CTP biosynthesis via de novo pathway; CTP from UDP: step 2/2. Allosterically activated by GTP, when glutamine is the substrate; GTP has no effect on the reaction when ammonia is the substrate. The allosteric effector GTP functions by stabilizing the protein conformation that binds the tetrahedral intermediate(s) formed during glutamine hydrolysis. Inhibited by the product CTP, via allosteric rather than competitive inhibition. Catalyzes the ATP-dependent amination of UTP to CTP with either L-glutamine or ammonia as the source of nitrogen. Regulates intracellular CTP levels through interactions with the four ribonucleotide triphosphates. The chain is CTP synthase from Synechococcus sp. (strain JA-3-3Ab) (Cyanobacteria bacterium Yellowstone A-Prime).